Consider the following 105-residue polypeptide: MSDSEYLTRAEAALAAIERALDDTDADIELERSGNVLTLEFENRTKIIVNLQPPMSEIWIAAKAGGFHFRFVDGEWRDTRSGTEFFAALSEYATQQAGEPVHFKA.

The protein belongs to the frataxin family.

Involved in iron-sulfur (Fe-S) cluster assembly. May act as a regulator of Fe-S biogenesis. The chain is Iron-sulfur cluster assembly protein CyaY from Paraburkholderia phytofirmans (strain DSM 17436 / LMG 22146 / PsJN) (Burkholderia phytofirmans).